The primary structure comprises 140 residues: ATP synthase epsilon chain (140 aa).

Belongs to the ATPase epsilon chain family. F-type ATPases have 2 components, CF(1) - the catalytic core - and CF(0) - the membrane proton channel. CF(1) has five subunits: alpha(3), beta(3), gamma(1), delta(1), epsilon(1). CF(0) has three main subunits: a, b and c.

The protein localises to the cell inner membrane. In terms of biological role, produces ATP from ADP in the presence of a proton gradient across the membrane. This Neisseria meningitidis serogroup A / serotype 4A (strain DSM 15465 / Z2491) protein is ATP synthase epsilon chain.